A 240-amino-acid chain; its full sequence is RNA polymerase sigma factor SigI (240 aa).

The Polymerase core binding motif lies at Asp-56 to Ile-69. The segment at residues Leu-194 to Lys-213 is a DNA-binding region (H-T-H motif).

The protein belongs to the sigma-70 factor family. SigI subfamily. Interacts with RsgI.

It is found in the cytoplasm. Its activity is regulated as follows. Negatively regulated by the anti-sigma-I factor RsgI. Functionally, sigma factors are initiation factors that promote the attachment of RNA polymerase to specific initiation sites and are then released. This sigma factor contributes to both stress response and virulence gene expression. The polypeptide is RNA polymerase sigma factor SigI (Bacillus anthracis).